Here is a 334-residue protein sequence, read N- to C-terminus: Holliday junction branch migration complex subunit RuvB (334 aa).

Residues 1–181 (MQDRLISGTE…FGIVQRLEFY (181 aa)) form a large ATPase domain (RuvB-L) region. ATP contacts are provided by residues I20, R21, G62, K65, T66, T67, 128-130 (EDY), R171, Y181, and R218. T66 provides a ligand contact to Mg(2+). The interval 182–252 (SVEDLTHIVS…MAQRALDMLN (71 aa)) is small ATPAse domain (RuvB-S). Residues 255-334 (KAGLDTLDRR…FGMTPPEPKN (80 aa)) are head domain (RuvB-H). R310 and R315 together coordinate DNA.

The protein belongs to the RuvB family. Homohexamer. Forms an RuvA(8)-RuvB(12)-Holliday junction (HJ) complex. HJ DNA is sandwiched between 2 RuvA tetramers; dsDNA enters through RuvA and exits via RuvB. An RuvB hexamer assembles on each DNA strand where it exits the tetramer. Each RuvB hexamer is contacted by two RuvA subunits (via domain III) on 2 adjacent RuvB subunits; this complex drives branch migration. In the full resolvosome a probable DNA-RuvA(4)-RuvB(12)-RuvC(2) complex forms which resolves the HJ.

The protein localises to the cytoplasm. The enzyme catalyses ATP + H2O = ADP + phosphate + H(+). Its function is as follows. The RuvA-RuvB-RuvC complex processes Holliday junction (HJ) DNA during genetic recombination and DNA repair, while the RuvA-RuvB complex plays an important role in the rescue of blocked DNA replication forks via replication fork reversal (RFR). RuvA specifically binds to HJ cruciform DNA, conferring on it an open structure. The RuvB hexamer acts as an ATP-dependent pump, pulling dsDNA into and through the RuvAB complex. RuvB forms 2 homohexamers on either side of HJ DNA bound by 1 or 2 RuvA tetramers; 4 subunits per hexamer contact DNA at a time. Coordinated motions by a converter formed by DNA-disengaged RuvB subunits stimulates ATP hydrolysis and nucleotide exchange. Immobilization of the converter enables RuvB to convert the ATP-contained energy into a lever motion, pulling 2 nucleotides of DNA out of the RuvA tetramer per ATP hydrolyzed, thus driving DNA branch migration. The RuvB motors rotate together with the DNA substrate, which together with the progressing nucleotide cycle form the mechanistic basis for DNA recombination by continuous HJ branch migration. Branch migration allows RuvC to scan DNA until it finds its consensus sequence, where it cleaves and resolves cruciform DNA. In Acinetobacter baumannii (strain AB307-0294), this protein is Holliday junction branch migration complex subunit RuvB.